Reading from the N-terminus, the 121-residue chain is Large ribosomal subunit protein uL14 (121 aa).

Belongs to the universal ribosomal protein uL14 family. Part of the 50S ribosomal subunit. Forms a cluster with proteins L3 and L19. In the 70S ribosome, L14 and L19 interact and together make contacts with the 16S rRNA in bridges B5 and B8.

Binds to 23S rRNA. Forms part of two intersubunit bridges in the 70S ribosome. The polypeptide is Large ribosomal subunit protein uL14 (Aquifex pyrophilus).